A 347-amino-acid polypeptide reads, in one-letter code: NADH-quinone oxidoreductase subunit H (347 aa).

The next 8 helical transmembrane spans lie at 25 to 45 (ILFMVVQSLVIFLVVVIVAAM), 95 to 115 (FMFTLAPAVAMFTALASFAII), 128 to 148 (IGILFFFAMAGIAVYAVLFGG), 168 to 188 (ISYEVFLGLSLMGVVALTGSF), 200 to 220 (GWYIIPQFFGFLTFVVAGVAV), 251 to 271 (FFIGEYVNVVLISALMTCLFF), 284 to 304 (FIPPAFWFMIKTLFFMTMFIL), and 324 to 344 (VCLPVTLINLLVTAAVILIFS).

Belongs to the complex I subunit 1 family. In terms of assembly, NDH-1 is composed of 14 different subunits. Subunits NuoA, H, J, K, L, M, N constitute the membrane sector of the complex.

It localises to the cell inner membrane. The enzyme catalyses a quinone + NADH + 5 H(+)(in) = a quinol + NAD(+) + 4 H(+)(out). In terms of biological role, NDH-1 shuttles electrons from NADH, via FMN and iron-sulfur (Fe-S) centers, to quinones in the respiratory chain. The immediate electron acceptor for the enzyme in this species is believed to be ubiquinone. Couples the redox reaction to proton translocation (for every two electrons transferred, four hydrogen ions are translocated across the cytoplasmic membrane), and thus conserves the redox energy in a proton gradient. This subunit may bind ubiquinone. The sequence is that of NADH-quinone oxidoreductase subunit H from Psychrobacter arcticus (strain DSM 17307 / VKM B-2377 / 273-4).